The chain runs to 349 residues: Terpene synthase 2 (349 aa).

A DDxx(x)D/E motif motif is present at residues 84–89 (DDLFDG). Residues 229–237 (NDCVSYEKE) carry the NDxxSxxxD/E motif motif.

This sequence belongs to the terpene synthase family.

The catalysed reaction is (2E,6E)-farnesyl diphosphate = (3S)-(+)-asterisca-2(9),6-diene + diphosphate. It carries out the reaction (2E)-geranyl diphosphate = (Z)-beta-ocimene + diphosphate. The enzyme catalyses (2E)-geranyl diphosphate + H2O = linalool + diphosphate. In terms of biological role, terpene synthase that converts its substrate farnesyl diphosphate (FPP) into the sesquiterpene (3S)-(+)-asterisca-2(9),6-diene. Is also able to convert geranyl diphosphate (GPP) into a mixture of monoterpenes including (Z)-beta-ocimene, allo-ocimene and linalool. In Dictyostelium discoideum (Social amoeba), this protein is Terpene synthase 2.